Reading from the N-terminus, the 154-residue chain is Myoglobin (154 aa).

The 147-residue stretch at 2 to 148 (GLSDDEWNHV…FRNDMASKYK (147 aa)) folds into the Globin domain. H65 contributes to the nitrite binding site. Residue H65 participates in O2 binding. H94 contributes to the heme b binding site.

The protein belongs to the globin family. In terms of assembly, monomeric.

It localises to the cytoplasm. Its subcellular location is the sarcoplasm. It carries out the reaction Fe(III)-heme b-[protein] + nitric oxide + H2O = Fe(II)-heme b-[protein] + nitrite + 2 H(+). It catalyses the reaction H2O2 + AH2 = A + 2 H2O. Functionally, monomeric heme protein which primary function is to store oxygen and facilitate its diffusion within muscle tissues. Reversibly binds oxygen through a pentacoordinated heme iron and enables its timely and efficient release as needed during periods of heightened demand. Depending on the oxidative conditions of tissues and cells, and in addition to its ability to bind oxygen, it also has a nitrite reductase activity whereby it regulates the production of bioactive nitric oxide. Under stress conditions, like hypoxia and anoxia, it also protects cells against reactive oxygen species thanks to its pseudoperoxidase activity. This is Myoglobin (MB) from Caretta caretta (Loggerhead sea turtle).